The chain runs to 329 residues: Apolipoprotein E (329 aa).

An N-terminal signal peptide occupies residues 1–18; sequence MKVLWAALVVALLAGCWA. 8 tandem repeats follow at residues 92–113, 114–135, 136–157, 158–179, 180–201, 202–223, 224–245, and 246–267. The tract at residues 92-267 is 8 X 22 AA approximate tandem repeats; the sequence is TLMEETMKEI…HLDEVREQME (176 aa). The residue at position 155 (M155) is a Methionine sulfoxide. A Phosphoserine modification is found at S159. The tract at residues 170-180 is LDL and other lipoprotein receptors binding; it reads HMRKLRKRVLR. Heparin is bound at residue 174–177; sequence LRKR. The interval 222 to 302 is lipid-binding and lipoprotein association; sequence HAKVDALATQ…GWFEPLVEDM (81 aa). Residue 241–248 coordinates heparin; sequence GQQLRGRL. The segment at 278 to 329 is homooligomerization; the sequence is NQMRQQAEAFQARLKGWFEPLVEDMQRQWAVLVEKVQAAVGTSPTTPPVETK. The specificity for association with VLDL stretch occupies residues 290-302; it reads RLKGWFEPLVEDM.

Belongs to the apolipoprotein A1/A4/E family. As to quaternary structure, homotetramer. May interact with ABCA1; functionally associated with ABCA1 in the biogenesis of HDLs. May interact with APP/A4 amyloid-beta peptide; the interaction is extremely stable in vitro but its physiological significance is unclear. May interact with MAPT. May interact with MAP2. In the cerebrospinal fluid, interacts with secreted SORL1. Interacts with PMEL; this allows the loading of PMEL luminal fragment on ILVs to induce fibril nucleation. Post-translationally, APOE exists as multiple glycosylated and sialylated glycoforms within cells and in plasma. The extent of glycosylation and sialylation are tissue and context specific. In terms of processing, glycated in plasma VLDL. Phosphorylated by FAM20C in the extracellular medium.

The protein resides in the secreted. The protein localises to the extracellular space. It is found in the extracellular matrix. It localises to the extracellular vesicle. Its subcellular location is the endosome. The protein resides in the multivesicular body. APOE is an apolipoprotein, a protein associating with lipid particles, that mainly functions in lipoprotein-mediated lipid transport between organs via the plasma and interstitial fluids. APOE is a core component of plasma lipoproteins and is involved in their production, conversion and clearance. Apolipoproteins are amphipathic molecules that interact both with lipids of the lipoprotein particle core and the aqueous environment of the plasma. As such, APOE associates with chylomicrons, chylomicron remnants, very low density lipoproteins (VLDL) and intermediate density lipoproteins (IDL) but shows a preferential binding to high-density lipoproteins (HDL). It also binds a wide range of cellular receptors including the LDL receptor/LDLR, the LDL receptor-related proteins LRP1, LRP2 and LRP8 and the very low-density lipoprotein receptor/VLDLR that mediate the cellular uptake of the APOE-containing lipoprotein particles. Finally, APOE also has a heparin-binding activity and binds heparan-sulfate proteoglycans on the surface of cells, a property that supports the capture and the receptor-mediated uptake of APOE-containing lipoproteins by cells. A main function of APOE is to mediate lipoprotein clearance through the uptake of chylomicrons, VLDLs, and HDLs by hepatocytes. APOE is also involved in the biosynthesis by the liver of VLDLs as well as their uptake by peripheral tissues ensuring the delivery of triglycerides and energy storage in muscle, heart and adipose tissues. By participating in the lipoprotein-mediated distribution of lipids among tissues, APOE plays a critical role in plasma and tissues lipid homeostasis. APOE is also involved in two steps of reverse cholesterol transport, the HDLs-mediated transport of cholesterol from peripheral tissues to the liver, and thereby plays an important role in cholesterol homeostasis. First, it is functionally associated with ABCA1 in the biogenesis of HDLs in tissues. Second, it is enriched in circulating HDLs and mediates their uptake by hepatocytes. APOE also plays an important role in lipid transport in the central nervous system, regulating neuron survival and sprouting. The chain is Apolipoprotein E (APOE) from Eumetopias jubatus (Steller sea lion).